Here is a 261-residue protein sequence, read N- to C-terminus: Cell division protein DivIB (261 aa).

The Cytoplasmic portion of the chain corresponds to 1-27; that stretch reads MEKGKVVVLEDRVPKLKERRRQKANRR. Residues 28–48 traverse the membrane as a helical segment; it reads LIAYLSFFFLFILCVLYFQSP. The segment at 47-117 is alpha; that stretch reads SPLGAVGHVE…PNTIAIHVRE (71 aa). Topologically, residues 49-261 are extracellular; that stretch reads LGAVGHVEVS…KEDGDETTSP (213 aa). Positions 50–118 constitute a POTRA domain; the sequence is GAVGHVEVSG…NTIAIHVREW (69 aa). The tract at residues 118–230 is beta; sequence WRRIAYVYDR…YPAIAAALDR (113 aa). Residues 231 to 260 form a gamma region; the sequence is NVKGVIHLEVGSYFVPYSPPKKEDGDETTS.

The protein belongs to the FtsQ/DivIB family. DivIB subfamily.

Its subcellular location is the cell membrane. Cell division protein that may be involved in stabilizing or promoting the assembly of the division complex. The chain is Cell division protein DivIB from Geobacillus kaustophilus (strain HTA426).